Reading from the N-terminus, the 766-residue chain is ABC-type oligopeptide transporter ABCB9 (766 aa).

8 helical membrane passes run 7 to 27 (VVVT…IYVF), 47 to 67 (VLDL…ATIG), 84 to 104 (LVIT…LLLF), 116 to 136 (FWAL…LWWL), 185 to 205 (VAFL…ETFL), 225 to 245 (FSTA…AAGI), 319 to 339 (VFMF…FPII), and 416 to 436 (SGLT…HLVI). The ABC transmembrane type-1 domain occupies 188–471 (LVAASFFLIV…VGSVYSGLMQ (284 aa)). Positions 504–740 (VDFENVTFTY…GGLYAKLVQR (237 aa)) constitute an ABC transporter domain. 539-546 (GPSGSGKS) provides a ligand contact to ATP.

Belongs to the ABC transporter superfamily. ABCB family. MHC peptide exporter (TC 3.A.1.209) subfamily. In terms of assembly, homodimer. Interacts (via TMD0 region) with LAMP1; this interaction strongly stabilizes ABCB9 and protects ABCB9 against lysosomal degradation. Interacts (via TMD0 region) with LAMP2 (isoform LAMP-2B). Interacts (via TMD0) with YIF1B; this interaction allows (but is not essential) the ER-to-Golgi trafficking and strongly depends on a salt bridge within TMD0. In terms of tissue distribution, highly expressed in testis, and at moderate levels in brain, spinal cord, and thyroid. Not expressed in monocytes but strongly expressed during differentiation of monocytes to dendritic cells and macrophages.

The protein resides in the lysosome membrane. It catalyses the reaction a [oligopeptide](in) + ATP + H2O = a [oligopeptide](out) + ADP + phosphate + H(+). Its activity is regulated as follows. Transport activity is limited by threshold levels of luminal peptide. ATP hydrolysis is reduced in the presence of the spatial challenging 18-mer peptide by 50% and the branched 16-mer peptide by 75%. Transport rate of the longer peptides is strongly reduced. In terms of biological role, ATP-dependent low-affinity peptide transporter which translocates a broad spectrum of peptides from the cytosol to the lysosomal lumen for degradation. Displays a broad peptide length specificity from 6-mer up to at least 59-mer peptides with an optimum of 23-mers. Binds and transports smaller and larger peptides with the same affinity. Favors positively charged, aromatic or hydrophobic residues in the N- and C-terminal positions whereas negatively charged residues as well as asparagine and methionine are not favored. The chain is ABC-type oligopeptide transporter ABCB9 from Homo sapiens (Human).